Consider the following 360-residue polypeptide: Photosystem II protein D1 (360 aa).

Over 1–28 (MTTTLQRRESANLWERFCNWVTSTDNRL) the chain is Cytoplasmic. Residues 29 to 46 (YVGWFGVIMIPTLLAATI) traverse the membrane as a helical segment. The Lumenal portion of the chain corresponds to 47-117 (CFVIAFIAAP…NGGPYQLIIF (71 aa)). Histidine 118 is a chlorophyll a binding site. Residues 118–133 (HFLLGASCYMGRQWEL) traverse the membrane as a helical segment. Pheophytin a contacts are provided by tyrosine 126 and glutamine 130. The Cytoplasmic portion of the chain corresponds to 134–141 (SYRLGMRP). The chain crosses the membrane as a helical span at residues 142-156 (WICVAYSAPLASAFA). Pheophytin a is bound at residue tyrosine 147. The Lumenal portion of the chain corresponds to 157–196 (VFLIYPIGQGSFSDGMPLGISGTFNFMIVFQAEHNILMHP). Residues aspartate 170 and glutamate 189 each coordinate [CaMn4O5] cluster. A helical membrane pass occupies residues 197–218 (FHQLGVAGVFGGALFCAMHGSL). Residue histidine 198 participates in chlorophyll a binding. Methionine 214 contributes to the pheophytin a binding site. A quinone contacts are provided by residues histidine 215 and 264 to 265 (SF). Histidine 215 contacts Fe cation. The Cytoplasmic segment spans residues 219–273 (VTSSLIRETTETESANYGYKFGQEEETYNIVAAHGYFGRLIFQYASFNNSRSLHF). Residue histidine 272 coordinates Fe cation. A helical membrane pass occupies residues 274 to 288 (FLAAWRVVGVWFAAL). At 289 to 360 (GISTMAFNLN…VAMIAPSING (72 aa)) the chain is on the lumenal side. [CaMn4O5] cluster contacts are provided by histidine 332, glutamate 333, aspartate 342, and alanine 344. Residues 345–360 (SAESAPVAMIAPSING) constitute a propeptide that is removed on maturation.

It belongs to the reaction center PufL/M/PsbA/D family. PSII is composed of 1 copy each of membrane proteins PsbA, PsbB, PsbC, PsbD, PsbE, PsbF, PsbH, PsbI, PsbJ, PsbK, PsbL, PsbM, PsbT, PsbX, PsbY, PsbZ, Psb30/Ycf12, peripheral proteins PsbO, CyanoQ (PsbQ), PsbU, PsbV and a large number of cofactors. It forms dimeric complexes. It depends on The D1/D2 heterodimer binds P680, chlorophylls that are the primary electron donor of PSII, and subsequent electron acceptors. It shares a non-heme iron and each subunit binds pheophytin, quinone, additional chlorophylls, carotenoids and lipids. D1 provides most of the ligands for the Mn4-Ca-O5 cluster of the oxygen-evolving complex (OEC). There is also a Cl(-1) ion associated with D1 and D2, which is required for oxygen evolution. The PSII complex binds additional chlorophylls, carotenoids and specific lipids. as a cofactor. C-terminally processed by CtpA; processing is essential to allow assembly of the oxygen-evolving complex and thus photosynthetic growth. Post-translationally, tyr-161 forms a radical intermediate that is referred to as redox-active TyrZ, YZ or Y-Z.

Its subcellular location is the cellular thylakoid membrane. It catalyses the reaction 2 a plastoquinone + 4 hnu + 2 H2O = 2 a plastoquinol + O2. Functionally, photosystem II (PSII) is a light-driven water:plastoquinone oxidoreductase that uses light energy to abstract electrons from H(2)O, generating O(2) and a proton gradient subsequently used for ATP formation. It consists of a core antenna complex that captures photons, and an electron transfer chain that converts photonic excitation into a charge separation. The D1/D2 (PsbA/PsbD) reaction center heterodimer binds P680, the primary electron donor of PSII as well as several subsequent electron acceptors. This is Photosystem II protein D1 from Thermostichus vulcanus (Synechococcus vulcanus).